The primary structure comprises 351 residues: Phosphoribosylformylglycinamidine cyclo-ligase (351 aa).

It belongs to the AIR synthase family.

Its subcellular location is the cytoplasm. It catalyses the reaction 2-formamido-N(1)-(5-O-phospho-beta-D-ribosyl)acetamidine + ATP = 5-amino-1-(5-phospho-beta-D-ribosyl)imidazole + ADP + phosphate + H(+). It participates in purine metabolism; IMP biosynthesis via de novo pathway; 5-amino-1-(5-phospho-D-ribosyl)imidazole from N(2)-formyl-N(1)-(5-phospho-D-ribosyl)glycinamide: step 2/2. In Synechococcus sp. (strain JA-3-3Ab) (Cyanobacteria bacterium Yellowstone A-Prime), this protein is Phosphoribosylformylglycinamidine cyclo-ligase.